Consider the following 199-residue polypeptide: uncharacterized protein (199 aa).

Residues 21 to 38 (ISPSATNFIVSLVIMILI) traverse the membrane as a helical segment.

The protein localises to the membrane. This is an uncharacterized protein from Saccharomyces cerevisiae (strain ATCC 204508 / S288c) (Baker's yeast).